The following is a 1277-amino-acid chain: Neural cell adhesion molecule L1 (1277 aa).

Residues M1–A34 form the signal peptide. Residues A35–W1135 are Extracellular-facing. Ig-like C2-type domains follow at residues P51–S140, P150–T241, P256–T344, P349–Y437, and P443–E528. Disulfide bonds link C72/C129, C173/C224, C280/C328, C370/C421, and C465/C514. N-linked (GlcNAc...) asparagine glycosylation occurs at N317. N-linked (GlcNAc...) asparagine glycans are attached at residues N503, N520, and N531. The Ig-like C2-type 6 domain occupies R532–T623. The cysteines at positions 554 and 607 are disulfide-linked. Fibronectin type-III domains are found at residues P630–D725, N730–D824, A829–G931, P935–G1030, and P1032–S1129. The tract at residues S714–D740 is disordered. N794 and N839 each carry an N-linked (GlcNAc...) asparagine glycan. N-linked (GlcNAc...) asparagine glycans are attached at residues N1035, N1046, N1068, N1083, and N1108. Residues F1136 to I1156 traverse the membrane as a helical segment. The Cytoplasmic segment spans residues K1157–N1277. 2 disordered regions span residues K1163 to E1216 and N1232 to N1277. A compositionally biased stretch (basic and acidic residues) spans S1165–T1201. Over residues N1232 to S1242 the composition is skewed to polar residues. Low complexity predominate over residues P1255–N1277.

Belongs to the immunoglobulin superfamily. L1/neurofascin/NgCAM family.

The protein resides in the cell membrane. The protein localises to the cell projection. It is found in the growth cone. In terms of biological role, neural cell adhesion molecule involved in the dynamics of cell adhesion and in the generation of transmembrane signals at tyrosine kinase receptors. During brain development, critical in multiple processes, including neuronal migration, axonal growth and fasciculation, and synaptogenesis. In the mature brain, plays a role in the dynamics of neuronal structure and function, including synaptic plasticity. The chain is Neural cell adhesion molecule L1 (l1cam) from Takifugu rubripes (Japanese pufferfish).